The primary structure comprises 487 residues: Protein SMG9 (487 aa).

2 disordered regions span residues 30–83 (EDAA…PPAL) and 136–164 (RDKG…LQPP). Positions 42–70 (LKKDRDREQETWDRERDKDRKLERDREAE) are enriched in basic and acidic residues.

It belongs to the SMG9 family.

Functionally, involved in nonsense-mediated decay (NMD) of mRNAs containing premature stop codons. Probable component of kinase complex containing nonC and recruited to stalled ribosomes. In Drosophila melanogaster (Fruit fly), this protein is Protein SMG9.